Reading from the N-terminus, the 408-residue chain is Homogentisate geranylgeranyltransferase (408 aa).

The N-terminal 68 residues, 1–68 (MQATTAAAAA…SAISQATSPR (68 aa)), are a transit peptide targeting the chloroplast. 9 consecutive transmembrane segments (helical) span residues 122-142 (HTIFGTIIGITSVSLLPMKSI), 149-169 (VLKGYLEALAAALCMNIYVVG), 194-214 (SVATGVFLVVTFLIMSFSIGI), 217-237 (GSVPLMYALVVSFLLGSAYSI), 248-268 (ALLAASCILFVRAILVQLAFF), 286-306 (LVFATLFMCCFSAVIALFKDI), 329-349 (VYQLCISILLTAYLAATVVGA), 352-372 (THLLQKIITVSGHGLLALTLW), and 386-406 (VTSFYMFIWKLFYAEYFLIPF).

It belongs to the UbiA prenyltransferase family.

The protein localises to the plastid. It localises to the chloroplast membrane. The enzyme catalyses homogentisate + (2E,6E,10E)-geranylgeranyl diphosphate + H(+) = 6-geranylgeranyl-2-methylbenzene-1,4-diol + CO2 + diphosphate. It functions in the pathway cofactor biosynthesis; tocopherol biosynthesis. Functionally, involved in the synthesis of tocotrienol (vitamin E). Catalyzes the condensation of homogentisate and geranylgeranyl diphosphate to form 2-methyl-6-geranylgeranylbenzoquinol. Possesses low activity with phytyl diphosphate as substrate. This chain is Homogentisate geranylgeranyltransferase, found in Triticum aestivum (Wheat).